The sequence spans 318 residues: Olfactory receptor 5G25 (318 aa).

The Extracellular portion of the chain corresponds to 1–25; sequence MMHRNQTVVTEFFFTGLTSSFHLQI. An N-linked (GlcNAc...) asparagine glycan is attached at N5. Residues 26–46 form a helical membrane-spanning segment; sequence VLFLTFLCVYLATLLGNLGMI. At 47–54 the chain is on the cytoplasmic side; it reads ILIHQDTR. The helical transmembrane segment at 55–75 threads the bilayer; it reads LHIPMYFFLSHLSFVDACSSS. The Extracellular portion of the chain corresponds to 76 to 99; that stretch reads VISPKMLSDIFVDKKVISFLGCAI. Cysteines 97 and 189 form a disulfide. Residues 100-120 traverse the membrane as a helical segment; it reads QFCLFSQFVVTECFLLASMAY. At 121 to 133 the chain is on the cytoplasmic side; that stretch reads DRYVAICKPLLYT. A helical membrane pass occupies residues 134 to 154; the sequence is LIMSQRVCVQLVIGPYSIGLI. Residues 155–196 are Extracellular-facing; that stretch reads STVVHTTSAFILPYCGPNLINHFFCDLLPVLSLACADTQMNK. Residues 197–217 traverse the membrane as a helical segment; the sequence is HLLFIMAGILGVFSGIIILVS. The Cytoplasmic segment spans residues 218–237; the sequence is YVYIAITILKINSADGRRKA. A helical transmembrane segment spans residues 238–258; the sequence is FSTCSSHLTAVSILYGTLFFI. Residues 259-271 are Extracellular-facing; it reads YVRPSSSFSLDIN. The chain crosses the membrane as a helical span at residues 272 to 292; it reads KVVSLFYTAVIPMLNPFIYSL. At 293–318 the chain is on the cytoplasmic side; the sequence is RNKEVKDALIRTFEKKFCYSLQDKIL.

Belongs to the G-protein coupled receptor 1 family.

The protein resides in the cell membrane. Functionally, potential odorant receptor. In Mus musculus (Mouse), this protein is Olfactory receptor 5G25.